Reading from the N-terminus, the 415-residue chain is MKFNEAPSADGVWHHCHLLPAADPAQAIRDGAIVVEQGRIAWLGAFAALPDVYRHLPRHDANGAWITPGLVDCHTHLVYGGQRADEFAMRLAGASYEEIARAGGGIVSTVRATREADEATLFAQASARLEPLLAEGVTAIEIKSGYGLSLEAERKQLRVARQLGETYGVAVHTTFLGAHALPPEYAGRADAYIELVCETMLPALAAEGLVDAVDAFCEGIGFSIAQTTRVFEAAARHGLPVKLHAEQLSNLGGAALAARHKAISADHLEHLDEAGVVAMAEAGTVAVLLPGAYYFLRDTQLPPLALLRKHGVPMAISTDHNPGTSPTTSLLLMMNMGCTIFRMTVPEVLAGVTTHAARALGAADRHGLLAVDRAADFVLWQVASPAELAYWFGRNPCAAVVRRGRVFRKGEGWQR.

Positions 74 and 76 each coordinate Fe(3+). Zn(2+) is bound by residues His-74 and His-76. The 4-imidazolone-5-propanoate site is built by Arg-83, Tyr-146, and His-179. Tyr-146 is a binding site for N-formimidoyl-L-glutamate. His-244 is a binding site for Fe(3+). Residue His-244 participates in Zn(2+) binding. Gln-247 serves as a coordination point for 4-imidazolone-5-propanoate. Asp-319 lines the Fe(3+) pocket. Residue Asp-319 coordinates Zn(2+). Residues Asn-321 and Gly-323 each coordinate N-formimidoyl-L-glutamate. Residue Thr-324 participates in 4-imidazolone-5-propanoate binding.

Belongs to the metallo-dependent hydrolases superfamily. HutI family. Requires Zn(2+) as cofactor. The cofactor is Fe(3+).

Its subcellular location is the cytoplasm. The enzyme catalyses 4-imidazolone-5-propanoate + H2O = N-formimidoyl-L-glutamate. The protein operates within amino-acid degradation; L-histidine degradation into L-glutamate; N-formimidoyl-L-glutamate from L-histidine: step 3/3. In terms of biological role, catalyzes the hydrolytic cleavage of the carbon-nitrogen bond in imidazolone-5-propanoate to yield N-formimidoyl-L-glutamate. It is the third step in the universal histidine degradation pathway. In Cupriavidus metallidurans (strain ATCC 43123 / DSM 2839 / NBRC 102507 / CH34) (Ralstonia metallidurans), this protein is Imidazolonepropionase.